The chain runs to 200 residues: Adenylyl-sulfate kinase (200 aa).

35 to 42 (GLPASGKS) serves as a coordination point for ATP. Ser-109 functions as the Phosphoserine intermediate in the catalytic mechanism.

Belongs to the APS kinase family.

The enzyme catalyses adenosine 5'-phosphosulfate + ATP = 3'-phosphoadenylyl sulfate + ADP + H(+). The protein operates within sulfur metabolism; hydrogen sulfide biosynthesis; sulfite from sulfate: step 2/3. Its function is as follows. Catalyzes the synthesis of activated sulfate. This chain is Adenylyl-sulfate kinase, found in Thermodesulfovibrio yellowstonii (strain ATCC 51303 / DSM 11347 / YP87).